The following is a 220-amino-acid chain: Glutamine amidotransferase-like class 1 domain-containing protein 1 (220 aa).

Residues 1-38 (MASERLPNRPACLLVASGAAEGVSAQSFLHCFTMASTA) form the signal peptide. Asn201 is a glycosylation site (N-linked (GlcNAc...) asparagine).

It belongs to the peptidase C56 family. Homotetramer. Component of the FERRY complex composed of five subunits, TBCK, PPP1R21, FERRY3, CRYZL1 and GATD1 with a ratio of 1:2:1:2:4, respectively.

The protein localises to the secreted. Its subcellular location is the early endosome. Its function is as follows. Component of the FERRY complex (Five-subunit Endosomal Rab5 and RNA/ribosome intermediary). The FERRY complex directly interacts with mRNAs and RAB5A, and functions as a RAB5A effector involved in the localization and the distribution of specific mRNAs most likely by mediating their endosomal transport. The complex recruits mRNAs and ribosomes to early endosomes through direct mRNA-interaction. The chain is Glutamine amidotransferase-like class 1 domain-containing protein 1 from Homo sapiens (Human).